Consider the following 455-residue polypeptide: Bifunctional protein GlmU (455 aa).

Positions 1 to 226 (MGLSVVILAA…EFEILGVNDR (226 aa)) are pyrophosphorylase. UDP-N-acetyl-alpha-D-glucosamine contacts are provided by residues 8-11 (LAAG), lysine 22, glutamine 73, 78-79 (GT), 99-101 (YGD), glycine 136, glutamate 151, asparagine 166, and asparagine 224. Aspartate 101 provides a ligand contact to Mg(2+). Position 224 (asparagine 224) interacts with Mg(2+). Residues 227–247 (TQLASLERVWQRNVAEKIMAK) are linker. The interval 248 to 455 (GVSIADPNRF…WQRSVKKTDK (208 aa)) is N-acetyltransferase. Arginine 330 and lysine 348 together coordinate UDP-N-acetyl-alpha-D-glucosamine. The active-site Proton acceptor is the histidine 360. UDP-N-acetyl-alpha-D-glucosamine contacts are provided by tyrosine 363 and asparagine 374. Acetyl-CoA contacts are provided by residues alanine 377, 383–384 (NY), serine 402, alanine 420, and arginine 437.

It in the N-terminal section; belongs to the N-acetylglucosamine-1-phosphate uridyltransferase family. The protein in the C-terminal section; belongs to the transferase hexapeptide repeat family. In terms of assembly, homotrimer. It depends on Mg(2+) as a cofactor.

It is found in the cytoplasm. The catalysed reaction is alpha-D-glucosamine 1-phosphate + acetyl-CoA = N-acetyl-alpha-D-glucosamine 1-phosphate + CoA + H(+). The enzyme catalyses N-acetyl-alpha-D-glucosamine 1-phosphate + UTP + H(+) = UDP-N-acetyl-alpha-D-glucosamine + diphosphate. Its pathway is nucleotide-sugar biosynthesis; UDP-N-acetyl-alpha-D-glucosamine biosynthesis; N-acetyl-alpha-D-glucosamine 1-phosphate from alpha-D-glucosamine 6-phosphate (route II): step 2/2. It participates in nucleotide-sugar biosynthesis; UDP-N-acetyl-alpha-D-glucosamine biosynthesis; UDP-N-acetyl-alpha-D-glucosamine from N-acetyl-alpha-D-glucosamine 1-phosphate: step 1/1. The protein operates within bacterial outer membrane biogenesis; LPS lipid A biosynthesis. Its function is as follows. Catalyzes the last two sequential reactions in the de novo biosynthetic pathway for UDP-N-acetylglucosamine (UDP-GlcNAc). The C-terminal domain catalyzes the transfer of acetyl group from acetyl coenzyme A to glucosamine-1-phosphate (GlcN-1-P) to produce N-acetylglucosamine-1-phosphate (GlcNAc-1-P), which is converted into UDP-GlcNAc by the transfer of uridine 5-monophosphate (from uridine 5-triphosphate), a reaction catalyzed by the N-terminal domain. The sequence is that of Bifunctional protein GlmU from Francisella tularensis subsp. holarctica (strain OSU18).